Reading from the N-terminus, the 291-residue chain is ATP synthase gamma chain (291 aa).

The protein belongs to the ATPase gamma chain family. F-type ATPases have 2 components, CF(1) - the catalytic core - and CF(0) - the membrane proton channel. CF(1) has five subunits: alpha(3), beta(3), gamma(1), delta(1), epsilon(1). CF(0) has three main subunits: a, b and c.

It is found in the cell inner membrane. Produces ATP from ADP in the presence of a proton gradient across the membrane. The gamma chain is believed to be important in regulating ATPase activity and the flow of protons through the CF(0) complex. This chain is ATP synthase gamma chain, found in Rhodopseudomonas palustris (strain BisB5).